The chain runs to 396 residues: Tryptophan synthase beta chain (396 aa).

Position 86 is an N6-(pyridoxal phosphate)lysine (K86).

The protein belongs to the TrpB family. Tetramer of two alpha and two beta chains. Pyridoxal 5'-phosphate serves as cofactor.

It carries out the reaction (1S,2R)-1-C-(indol-3-yl)glycerol 3-phosphate + L-serine = D-glyceraldehyde 3-phosphate + L-tryptophan + H2O. The protein operates within amino-acid biosynthesis; L-tryptophan biosynthesis; L-tryptophan from chorismate: step 5/5. In terms of biological role, the beta subunit is responsible for the synthesis of L-tryptophan from indole and L-serine. The protein is Tryptophan synthase beta chain of Aliivibrio fischeri (strain MJ11) (Vibrio fischeri).